Consider the following 516-residue polypeptide: MTLLITGDSIVSAEAVWDHVTMANRELAFKAGDVIKVLDASNKDWWWGQIDDEEGWFPASFVRLWVNQEDEVEEGPSDVQNGHLDPNSDCLCLGRPLQNRDQMRANVINEIMSTERHYIKHLKDICEGYLKQCRKRRDMFSDEQLKVIFGNIEDIYRFQMGFVRDLEKQYNNDDPHLSEIGPCFLEHQDGFWIYSEYCNNHLDACMELSKLMKDSRYQHFFEACRLLQQMIDIAIDGFLLTPVQKICKYPLQLAELLKYTAQDHSDYRYVAAALAVMRNVTQQINERKRRLENIDKIAQWQASVLDWEGEDILDRSSELIYTGEMAWIYQPYGRNQQRVFFLFDHQMVLCKKDLIRRDILYYKGRIDMDKYEVVDIEDGRDDDFNVSMKNAFKLHNKETEEIHLFFAKKLEEKIRWLRAFREERKMVQEDEKIGFEISENQKRQAAMTVRKVPKQKGVNSARSVPPSYPPPQDPLNHGQYLVPDGIAQSQVFEFTEPKRSQSPFWQNFSRLTPFKK.

One can recognise an SH3 domain in the interval 8–67; sequence DSIVSAEAVWDHVTMANRELAFKAGDVIKVLDASNKDWWWGQIDDEEGWFPASFVRLWVN. Residues 100-110 form an interaction with GPHN region; the sequence is RDQMRANVINE. Positions 103 to 287 constitute a DH domain; it reads MRANVINEIM…RNVTQQINER (185 aa). The PH domain occupies 318 to 425; the sequence is ELIYTGEMAW…WLRAFREERK (108 aa). Residues 453–480 are disordered; sequence PKQKGVNSARSVPPSYPPPQDPLNHGQY. Residue S502 is modified to Phosphoserine.

As to quaternary structure, interacts with GPHN. Detected in brain. Detected at low levels in heart.

It is found in the cytoplasm. The protein resides in the postsynaptic density. In terms of biological role, acts as a guanine nucleotide exchange factor (GEF) for CDC42. Promotes formation of GPHN clusters. This chain is Rho guanine nucleotide exchange factor 9 (ARHGEF9), found in Homo sapiens (Human).